The following is a 410-amino-acid chain: Caspase-1 (410 aa).

The CARD domain occupies 1–91; the sequence is MADKVLKGKR…HLAETLGLSS (91 aa). Residues 1–119 constitute a propeptide that is removed on maturation; it reads MADKVLKGKR…PLPASVNNMP (119 aa). The span at 88 to 104 shows a compositional bias: polar residues; it reads GLSSSPQSGNSQNTTDS. The disordered stretch occupies residues 88–125; it reads GLSSSPQSGNSQNTTDSEVAFPPLPASVNNMPGPAEPE. Residues His235 and Cys284 contribute to the active site. A propeptide spanning residues 297–322 is cleaved from the precursor; that stretch reads SPAAPMDSTSQMGSSLSQVGDNLEDD.

The protein belongs to the peptidase C14A family. Heterotetramer that consists of two anti-parallel arranged heterodimers, each one formed by a 20 kDa (Caspase-1 subunit p20) and a 10 kDa (Caspase-1 subunit p10) subunit. May be a component of the inflammasome, a protein complex which also includes PYCARD, CARD8 and NLRP2 and whose function would be the activation of pro-inflammatory caspases. Component of the AIM2 PANoptosome complex, a multiprotein complex that drives inflammatory cell death (PANoptosis). Both the p10 and p20 subunits interact with MEFV. Interacts with CARD17P/INCA and CARD18. Interacts with SERPINB1; this interaction regulates CASP1 activity. As to quaternary structure, heterotetramer that consists of two anti-parallel arranged heterodimers, each one formed by a 20 kDa (Caspase-1 subunit p20) and a 10 kDa (Caspase-1 subunit p10) subunit. The two subunits are derived from the precursor sequence by an autocatalytic mechanism. In terms of processing, ubiquitinated via 'Lys-11'-linked polyubiquitination. Deubiquitinated by USP8.

The protein resides in the cytoplasm. Its subcellular location is the cell membrane. It catalyses the reaction Strict requirement for an Asp residue at position P1 and has a preferred cleavage sequence of Tyr-Val-Ala-Asp-|-.. In terms of biological role, thiol protease involved in a variety of inflammatory processes by proteolytically cleaving other proteins, such as the precursors of the inflammatory cytokines interleukin-1 beta (IL1B) and interleukin 18 (IL18) as well as the pyroptosis inducer Gasdermin-D (GSDMD), into active mature peptides. Plays a key role in cell immunity as an inflammatory response initiator: once activated through formation of an inflammasome complex, it initiates a pro-inflammatory response through the cleavage of the two inflammatory cytokines IL1B and IL18, releasing the mature cytokines which are involved in a variety of inflammatory processes. Cleaves a tetrapeptide after an Asp residue at position P1. Also initiates pyroptosis, a programmed lytic cell death pathway, through cleavage of GSDMD. In contrast to cleavage of interleukin IL1B, recognition and cleavage of GSDMD is not strictly dependent on the consensus cleavage site but depends on an exosite interface on CASP1 that recognizes and binds the Gasdermin-D, C-terminal (GSDMD-CT) part. Cleaves and activates CASP7 in response to bacterial infection, promoting plasma membrane repair. Upon inflammasome activation, during DNA virus infection but not RNA virus challenge, controls antiviral immunity through the cleavage of CGAS, rendering it inactive. In apoptotic cells, cleaves SPHK2 which is released from cells and remains enzymatically active extracellularly. The chain is Caspase-1 (CASP1) from Felis catus (Cat).